We begin with the raw amino-acid sequence, 378 residues long: Filamin-binding LIM protein 1 (378 aa).

The filamin-binding stretch occupies residues 1-69; it reads MASKPEKRVA…RSWMPPGRAA (69 aa). The interval 38 to 179 is disordered; sequence WPGRPWESAP…PPPEEPVSFP (142 aa). Residues 103 to 115 are compositionally biased toward pro residues; it reads LPPPPPPPAADLP. 3 consecutive LIM zinc-binding domains span residues 186-247, 248-305, and 306-375; these read DICA…TLEK, CGKC…RKFA, and PVCS…RSAA. The segment at 281–378 is PLEKHC1-binding; the sequence is IGDESFALDS…HVKRSAAGCC (98 aa).

In terms of assembly, interacts with PLEKHC1, FLNA, FLNB and FLNC. Interacts with NKX2-5.

It is found in the cell junction. Its subcellular location is the focal adhesion. It localises to the cytoplasm. The protein resides in the cytoskeleton. The protein localises to the stress fiber. Serves as an anchoring site for cell-ECM adhesion proteins and filamin-containing actin filaments. Is implicated in cell shape modulation (spreading) and motility. May participate in the regulation of filamin-mediated cross-linking and stabilization of actin filaments. May also regulate the assembly of filamin-containing signaling complexes that control actin assembly. Promotes dissociation of FLNA from ITGB3 and ITGB7. Promotes activation of integrins and regulates integrin-mediated cell-cell adhesion. This is Filamin-binding LIM protein 1 (FBLIM1) from Bos taurus (Bovine).